A 350-amino-acid polypeptide reads, in one-letter code: tRNA uridine(34) hydroxylase (350 aa).

The 95-residue stretch at 146 to 240 (DDPDAVFIDM…YARRARAQGL (95 aa)) folds into the Rhodanese domain. Cys-200 (cysteine persulfide intermediate) is an active-site residue. The span at 319-328 (RRRRAGRENG) shows a compositional bias: basic and acidic residues. A disordered region spans residues 319–350 (RRRRAGRENGNKIFNKSRGRLNSKLSIPDPAE).

This sequence belongs to the TrhO family.

It catalyses the reaction uridine(34) in tRNA + AH2 + O2 = 5-hydroxyuridine(34) in tRNA + A + H2O. In terms of biological role, catalyzes oxygen-dependent 5-hydroxyuridine (ho5U) modification at position 34 in tRNAs. The chain is tRNA uridine(34) hydroxylase from Salmonella typhimurium (strain LT2 / SGSC1412 / ATCC 700720).